The following is a 288-amino-acid chain: 33 kDa chaperonin (288 aa).

Intrachain disulfides connect cysteine 235–cysteine 237 and cysteine 268–cysteine 271.

It belongs to the HSP33 family. Post-translationally, under oxidizing conditions two disulfide bonds are formed involving the reactive cysteines. Under reducing conditions zinc is bound to the reactive cysteines and the protein is inactive.

The protein resides in the cytoplasm. Redox regulated molecular chaperone. Protects both thermally unfolding and oxidatively damaged proteins from irreversible aggregation. Plays an important role in the bacterial defense system toward oxidative stress. This chain is 33 kDa chaperonin, found in Streptococcus thermophilus (strain ATCC BAA-491 / LMD-9).